A 430-amino-acid chain; its full sequence is Trigger factor (430 aa).

The PPIase FKBP-type domain maps to 157–242 (GDLVALETWS…AVEVSEPVLP (86 aa)).

The protein belongs to the FKBP-type PPIase family. Tig subfamily.

It localises to the cytoplasm. It carries out the reaction [protein]-peptidylproline (omega=180) = [protein]-peptidylproline (omega=0). In terms of biological role, involved in protein export. Acts as a chaperone by maintaining the newly synthesized protein in an open conformation. Functions as a peptidyl-prolyl cis-trans isomerase. This chain is Trigger factor, found in Xanthomonas oryzae pv. oryzae (strain PXO99A).